The sequence spans 213 residues: Uridine kinase (213 aa).

Residue 13–20 participates in ATP binding; the sequence is GASASGKS.

It belongs to the uridine kinase family.

It localises to the cytoplasm. The enzyme catalyses uridine + ATP = UMP + ADP + H(+). It catalyses the reaction cytidine + ATP = CMP + ADP + H(+). It functions in the pathway pyrimidine metabolism; CTP biosynthesis via salvage pathway; CTP from cytidine: step 1/3. The protein operates within pyrimidine metabolism; UMP biosynthesis via salvage pathway; UMP from uridine: step 1/1. In Haemophilus influenzae (strain PittGG), this protein is Uridine kinase.